Here is a 396-residue protein sequence, read N- to C-terminus: Protein ANTAGONIST OF LIKE HETEROCHROMATIN PROTEIN 1 (396 aa).

Basic residues-rich tracts occupy residues 1 to 12 (MAPVKQKKKNKK) and 20 to 29 (KLAKNKEKKR). The tract at residues 1-29 (MAPVKQKKKNKKKPLDKAKKLAKNKEKKR) is disordered. The Nuclear localization signal motif lies at 6 to 13 (QKKKNKKK). Positions 183 to 348 (IDTTHIIMTL…IILVCCLLHN (166 aa)) constitute a DDE Tnp4 domain.

It belongs to the HARBI1 family. In terms of assembly, interacts with core components of POLYCOMB REPRESSIVE COMPLEX 2 (PRC2), a PcG protein complex with H3K27me3 histone methyltransferase activity. Associates with plant-specific PRC2 accessory components such as MSI1, EMF2, VRN2, FIE and CLF. It depends on a divalent metal cation as a cofactor. In terms of tissue distribution, expressed in roots, inflorescence stems, seedlings, leaves, flower buds, inflorescences, and siliques.

It is found in the nucleus. Transposase-derived protein that may have nuclease activity. Antagonist of polycomb-group (PcG) protein-mediated chromatin silencing, probably by preventing the association of POLYCOMB REPRESSIVE COMPLEX 2 (PRC2) with its accessory components. Needed for full reactivation of several floral homeotic genes that are repressed by PcG. The chain is Protein ANTAGONIST OF LIKE HETEROCHROMATIN PROTEIN 1 from Arabidopsis thaliana (Mouse-ear cress).